The primary structure comprises 106 residues: Phosphoribosyl-ATP pyrophosphatase (106 aa).

Belongs to the PRA-PH family.

The protein resides in the cytoplasm. It carries out the reaction 1-(5-phospho-beta-D-ribosyl)-ATP + H2O = 1-(5-phospho-beta-D-ribosyl)-5'-AMP + diphosphate + H(+). It functions in the pathway amino-acid biosynthesis; L-histidine biosynthesis; L-histidine from 5-phospho-alpha-D-ribose 1-diphosphate: step 2/9. This chain is Phosphoribosyl-ATP pyrophosphatase, found in Lactiplantibacillus plantarum (strain ATCC BAA-793 / NCIMB 8826 / WCFS1) (Lactobacillus plantarum).